The following is a 313-amino-acid chain: Ribosomal RNA small subunit methyltransferase H (313 aa).

S-adenosyl-L-methionine-binding positions include 35–37 (GGH), D55, F79, D101, and Q108.

This sequence belongs to the methyltransferase superfamily. RsmH family.

The protein localises to the cytoplasm. The enzyme catalyses cytidine(1402) in 16S rRNA + S-adenosyl-L-methionine = N(4)-methylcytidine(1402) in 16S rRNA + S-adenosyl-L-homocysteine + H(+). Functionally, specifically methylates the N4 position of cytidine in position 1402 (C1402) of 16S rRNA. The polypeptide is Ribosomal RNA small subunit methyltransferase H (Shigella flexneri).